Consider the following 329-residue polypeptide: Ribosomal RNA small subunit methyltransferase H (329 aa).

Residues 34-36 (GGY), Asp-52, Phe-79, Asp-100, and Gln-107 contribute to the S-adenosyl-L-methionine site. Residues 285–329 (GEDEVAHNPRARSAKLRAAERTSAPAHKDDQSSSWPRLSDVMRGG) form a disordered region.

The protein belongs to the methyltransferase superfamily. RsmH family.

The protein resides in the cytoplasm. It carries out the reaction cytidine(1402) in 16S rRNA + S-adenosyl-L-methionine = N(4)-methylcytidine(1402) in 16S rRNA + S-adenosyl-L-homocysteine + H(+). Its function is as follows. Specifically methylates the N4 position of cytidine in position 1402 (C1402) of 16S rRNA. In Bradyrhizobium diazoefficiens (strain JCM 10833 / BCRC 13528 / IAM 13628 / NBRC 14792 / USDA 110), this protein is Ribosomal RNA small subunit methyltransferase H.